The sequence spans 369 residues: Anhydro-N-acetylmuramic acid kinase (369 aa).

12–19 (GTSMDGVD) is a binding site for ATP.

The protein belongs to the anhydro-N-acetylmuramic acid kinase family.

The catalysed reaction is 1,6-anhydro-N-acetyl-beta-muramate + ATP + H2O = N-acetyl-D-muramate 6-phosphate + ADP + H(+). It participates in amino-sugar metabolism; 1,6-anhydro-N-acetylmuramate degradation. It functions in the pathway cell wall biogenesis; peptidoglycan recycling. Catalyzes the specific phosphorylation of 1,6-anhydro-N-acetylmuramic acid (anhMurNAc) with the simultaneous cleavage of the 1,6-anhydro ring, generating MurNAc-6-P. Is required for the utilization of anhMurNAc either imported from the medium or derived from its own cell wall murein, and thus plays a role in cell wall recycling. The sequence is that of Anhydro-N-acetylmuramic acid kinase from Shewanella baltica (strain OS155 / ATCC BAA-1091).